The primary structure comprises 197 residues: Prefoldin subunit 3 (197 aa).

An N-acetylalanine modification is found at Ala2. Lys59 is modified (N6-acetyllysine).

It belongs to the prefoldin subunit alpha family. Heterohexamer of two PFD-alpha type and four PFD-beta type subunits. Binds to the C-terminal part of VHL.

Its subcellular location is the cytoplasm. It is found in the nucleus. Binds specifically to cytosolic chaperonin (c-CPN) and transfers target proteins to it. Binds to nascent polypeptide chain and promotes folding in an environment in which there are many competing pathways for nonnative proteins. The chain is Prefoldin subunit 3 (VBP1) from Bos taurus (Bovine).